The sequence spans 55 residues: Large ribosomal subunit protein bL33 (55 aa).

The protein belongs to the bacterial ribosomal protein bL33 family.

The sequence is that of Large ribosomal subunit protein bL33 from Burkholderia cenocepacia (strain ATCC BAA-245 / DSM 16553 / LMG 16656 / NCTC 13227 / J2315 / CF5610) (Burkholderia cepacia (strain J2315)).